Reading from the N-terminus, the 808-residue chain is Aminotransferase ALT4 (808 aa).

The protein belongs to the class-II pyridoxal-phosphate-dependent aminotransferase family. BioF subfamily. It depends on pyridoxal 5'-phosphate as a cofactor.

It participates in mycotoxin biosynthesis. Functionally, aminotransferase; part of the gene cluster that mediates the biosynthesis of the host-selective toxins (HSTs) AAL-toxins, sphinganine-analog mycotoxins responsible for Alternaria stem canker on tomato by the tomato pathotype. The biosynthesis starts with the polyketide synthase ALT1-catalyzed C-16 carbon chain assembly from one starter acetyl-CoA unit with malonyl-CoA extender units. ALT1 also selectively transfers methyl groups at the first and the third cycle of chain elongation for AAL toxin. The C-16 polyketide chain is released from the enzyme by a nucleophilic attack of a carbanion, which is derived from R-carbon of glycin by decarboxylation, on the carbonyl carbon of polyketide acyl chain. This step is probably catalyzed by a pyridoxal 5'-phosphate-dependent aminoacyl transferase ALT4. The respective functions of the other enzymes encoded by the cluster have still to be elucidated. The sphingosine N-acyltransferase-like protein ALT7 seems not to act as a resistance/self-tolerance factor against the toxin in the toxin biosynthetic gene cluster, contrary to what is expected. The sequence is that of Aminotransferase ALT4 from Alternaria alternata (Alternaria rot fungus).